A 111-amino-acid polypeptide reads, in one-letter code: MKTLLLAVAVVAFVCLGSADQLGLGRQQIDWGQGQAVGLPHGFCIQCNRKTWSNCSIGHRCLPYHMTCYTLYKPDENGEMKWAVKGCARMCPTAKSGERVKCCTGASCNSD.

The N-terminal stretch at 1–19 is a signal peptide; it reads MKTLLLAVAVVAFVCLGSA. Residues 20-34 constitute a propeptide that is removed on maturation; the sequence is DQLGLGRQQIDWGQG. A Pyrrolidone carboxylic acid modification is found at Gln35. Intrachain disulfides connect Cys44–Cys68, Cys47–Cys55, Cys61–Cys87, Cys91–Cys102, and Cys103–Cys108.

Monomer. As to expression, expressed by the venom gland.

It is found in the secreted. In terms of biological role, this bird-specific postsynaptic neurotoxin irreversibly binds and inhibits the chick muscle alpha-1-beta-1-gamma-delta (CHRNA1-CHRNB1-CHRNG-CHNRD) nicotinic acetylcholine receptor (nAChR) 100-fold more compared with the mouse receptor. The weak binding to mouse receptor is reversible. This is Denmotoxin from Boiga dendrophila (Mangrove snake).